Consider the following 432-residue polypeptide: Adenylosuccinate synthetase (432 aa).

GTP contacts are provided by residues glycine 12 to lysine 18 and glycine 40 to threonine 42. The active-site Proton acceptor is aspartate 13. Mg(2+) contacts are provided by aspartate 13 and glycine 40. IMP is bound by residues aspartate 13 to lysine 16, asparagine 38 to histidine 41, threonine 129, arginine 143, glutamine 224, threonine 239, and arginine 303. The active-site Proton donor is the histidine 41. Valine 299–arginine 305 provides a ligand contact to substrate. Residues arginine 305, lysine 331–aspartate 333, and glycine 413–glycine 415 each bind GTP.

Belongs to the adenylosuccinate synthetase family. As to quaternary structure, homodimer. The cofactor is Mg(2+).

Its subcellular location is the cytoplasm. The enzyme catalyses IMP + L-aspartate + GTP = N(6)-(1,2-dicarboxyethyl)-AMP + GDP + phosphate + 2 H(+). The protein operates within purine metabolism; AMP biosynthesis via de novo pathway; AMP from IMP: step 1/2. Functionally, plays an important role in the de novo pathway of purine nucleotide biosynthesis. Catalyzes the first committed step in the biosynthesis of AMP from IMP. This is Adenylosuccinate synthetase from Mycobacterium marinum (strain ATCC BAA-535 / M).